Here is a 199-residue protein sequence, read N- to C-terminus: Protein-methionine-sulfoxide reductase heme-binding subunit MsrQ (199 aa).

5 helical membrane passes run Val-13 to Gly-33, Leu-79 to Glu-99, Leu-120 to Met-140, Trp-147 to Trp-167, and Val-169 to Phe-189.

It belongs to the MsrQ family. In terms of assembly, heterodimer of a catalytic subunit (MsrP) and a heme-binding subunit (MsrQ). The cofactor is FMN. Heme b is required as a cofactor.

It is found in the cell inner membrane. Functionally, part of the MsrPQ system that repairs oxidized periplasmic proteins containing methionine sulfoxide residues (Met-O), using respiratory chain electrons. Thus protects these proteins from oxidative-stress damage caused by reactive species of oxygen and chlorine generated by the host defense mechanisms. MsrPQ is essential for the maintenance of envelope integrity under bleach stress, rescuing a wide series of structurally unrelated periplasmic proteins from methionine oxidation. MsrQ provides electrons for reduction to the reductase catalytic subunit MsrP, using the quinone pool of the respiratory chain. In Pectobacterium carotovorum subsp. carotovorum (strain PC1), this protein is Protein-methionine-sulfoxide reductase heme-binding subunit MsrQ.